A 686-amino-acid chain; its full sequence is MRTNPLTTVRNLGILAHVDAGKTTVTERILYLTGTTHKRGEVHDGTTVTDFDPQERDRGITIFAAAVSCAWAGHRINLIDTPGHVDFADEVERSLRVLDGAVAVFDAVAGVEPQSESVWRQADRHGVPRIAFVNKMDRAGADLDAAVASIRERLHPVPLVVQLPIGTEDGFTGVVDLPRMRALVWADGADAAEEGPVPGTLREEAARRRRVLEEAVAERHPGALEEFCDRETLTAATLTGALRDLTRTGDGVVVLCGSAYRNRGVEPLLDAVVAYLPSPLDVPPVRGTHDGAERERPADPAAPMAALAFKVNATPTGRLTYLRVYSGTIGKGDTVWDAGTRRTERIGRILRVRADRHDPLERAVAGDIVAVVGLKTARAGSTLCAPGAPLLLEPPGVAEPVVHVAVEARRSTETDRLAAALARLTEEDPSLALRTDPETAQTVLSGMGELHLEVAVERVRREYGLEVTVGRPGVAYRETVGEGVTGFVHRHVKQDGGAGQFAHIVLDVEPWEQDADGDGAGGGFVFRSTVVGGRVPQEYVRAVEAGCRDALAEGPLGGHPVTGLRVTLTDGRTHVKDSSDTAFRTAGRFGLRDALRASGMILLEPVVEVTVTVPEDGVGGVLGDLAARRGRVTGSDPRGGAVVVTATVPLAELFGYATRLRSRTQGRGTFTARPTGYAQAPAAVVR.

The region spanning 7–280 is the tr-type G domain; sequence TTVRNLGILA…AVVAYLPSPL (274 aa). GTP-binding positions include 16–23, 80–84, and 134–137; these read AHVDAGKT, DTPGH, and NKMD.

It belongs to the TRAFAC class translation factor GTPase superfamily. Classic translation factor GTPase family. EF-G/EF-2 subfamily.

It is found in the cytoplasm. In terms of biological role, catalyzes the GTP-dependent ribosomal translocation step during translation elongation. During this step, the ribosome changes from the pre-translocational (PRE) to the post-translocational (POST) state as the newly formed A-site-bound peptidyl-tRNA and P-site-bound deacylated tRNA move to the P and E sites, respectively. Catalyzes the coordinated movement of the two tRNA molecules, the mRNA and conformational changes in the ribosome. The chain is Elongation factor G 2 (fusB) from Streptomyces coelicolor (strain ATCC BAA-471 / A3(2) / M145).